Reading from the N-terminus, the 165-residue chain is Putative ankyrin repeat domain-containing protein 20A5 (165 aa).

ANK repeat units follow at residues Gln-66–Ile-95, Glu-99–Leu-128, and Tyr-132–Ala-161.

The protein is Putative ankyrin repeat domain-containing protein 20A5 (ANKRD20A5P) of Homo sapiens (Human).